Consider the following 78-residue polypeptide: U-scoloptoxin(04)-Er1a (78 aa).

The first 24 residues, 1–24 (MTRHLIFAAVLLVCLFVCWNAIGA), serve as a signal peptide directing secretion. The propeptide occupies 25–28 (QDAR).

The protein belongs to the scoloptoxin-04 family. Post-translationally, contains 2 disulfide bonds. In terms of tissue distribution, expressed by the venom gland.

It localises to the secreted. The sequence is that of U-scoloptoxin(04)-Er1a from Ethmostigmus rubripes (Giant centipede).